We begin with the raw amino-acid sequence, 407 residues long: Aurora kinase (407 aa).

2 disordered regions span residues 1–43 (MTPT…STSS) and 66–137 (ERQG…TQSK). Low complexity-rich tracts occupy residues 31 to 43 (SAST…STSS) and 126 to 136 (STTTTMTSTQS). The Protein kinase domain occupies 147–399 (FDIGRPLGKG…LEGVIAHAWI (253 aa)). Residues lysine 157, lysine 176, and 224-227 (LEYA) contribute to the ATP site. Residue aspartate 272 is the Proton acceptor of the active site. Aspartate 290 contacts ATP.

It belongs to the protein kinase superfamily. Ser/Thr protein kinase family.

It localises to the cytoplasm. The protein resides in the cytoskeleton. Its subcellular location is the spindle. The protein localises to the midbody. It is found in the microtubule organizing center. It localises to the centrosome. The protein resides in the nucleus. Its subcellular location is the chromosome. The protein localises to the centromere. The catalysed reaction is L-seryl-[protein] + ATP = O-phospho-L-seryl-[protein] + ADP + H(+). It carries out the reaction L-threonyl-[protein] + ATP = O-phospho-L-threonyl-[protein] + ADP + H(+). Its activity is regulated as follows. Cdc2 activity is required for activation. Functionally, serine/threonine protein kinase that contributes to the regulation of cell cycle progression. Involved in meiotic apparatus formation and polar body extrusion. Contributes to Plk1 activation and phosphorylation of histone H3 at 'Ser-10' during meiosis I. Required for accurate progression of early embryonic M phase. Involved in chromosome alignment and cleavage furrow formation during early embryonic cycles. May be involved in mitotic spindle formation and cytokinesis. The sequence is that of Aurora kinase from Patiria pectinifera (Starfish).